The primary structure comprises 181 residues: Oligoribonuclease (181 aa).

The 164-residue stretch at 8-171 (LIWIDMEMTG…ADIYDSIEEL (164 aa)) folds into the Exonuclease domain. Residue Tyr129 is part of the active site.

It belongs to the oligoribonuclease family.

The protein localises to the cytoplasm. Functionally, 3'-to-5' exoribonuclease specific for small oligoribonucleotides. This chain is Oligoribonuclease, found in Nitrosomonas europaea (strain ATCC 19718 / CIP 103999 / KCTC 2705 / NBRC 14298).